The chain runs to 273 residues: NH(3)-dependent NAD(+) synthetase (273 aa).

46 to 53 (GISGGQDS) is an ATP binding site. D52 is a Mg(2+) binding site. R139 lines the deamido-NAD(+) pocket. T159 contributes to the ATP binding site. E164 serves as a coordination point for Mg(2+). The deamido-NAD(+) site is built by K172 and D179. Residues K188 and T210 each coordinate ATP. 259-260 (HK) lines the deamido-NAD(+) pocket.

It belongs to the NAD synthetase family. In terms of assembly, homodimer.

The catalysed reaction is deamido-NAD(+) + NH4(+) + ATP = AMP + diphosphate + NAD(+) + H(+). It participates in cofactor biosynthesis; NAD(+) biosynthesis; NAD(+) from deamido-NAD(+) (ammonia route): step 1/1. In terms of biological role, catalyzes the ATP-dependent amidation of deamido-NAD to form NAD. Uses ammonia as a nitrogen source. The sequence is that of NH(3)-dependent NAD(+) synthetase from Streptococcus agalactiae serotype Ia (strain ATCC 27591 / A909 / CDC SS700).